The sequence spans 353 residues: Aromatic amino acid aminotransferase (353 aa).

An N6-(pyridoxal phosphate)lysine modification is found at Lys-217.

It belongs to the class-II pyridoxal-phosphate-dependent aminotransferase family. In terms of assembly, homodimer. Pyridoxal 5'-phosphate serves as cofactor.

It carries out the reaction an aromatic L-alpha-amino acid + 2-oxoglutarate = an aromatic oxo-acid + L-glutamate. Aminotransferase that catalyzes the conversion of aromatic amino acids and 2-oxoglutarate into corresponding aromatic oxo acids and L-glutamate. In Mycobacterium tuberculosis (strain ATCC 25177 / H37Ra), this protein is Aromatic amino acid aminotransferase.